A 457-amino-acid chain; its full sequence is Argininosuccinate lyase (457 aa).

Belongs to the lyase 1 family. Argininosuccinate lyase subfamily.

The protein localises to the cytoplasm. It catalyses the reaction 2-(N(omega)-L-arginino)succinate = fumarate + L-arginine. The protein operates within amino-acid biosynthesis; L-arginine biosynthesis; L-arginine from L-ornithine and carbamoyl phosphate: step 3/3. The sequence is that of Argininosuccinate lyase from Pectobacterium carotovorum subsp. carotovorum (strain PC1).